A 339-amino-acid polypeptide reads, in one-letter code: Biotin synthase (339 aa).

A Radical SAM core domain is found at 47–276; the sequence is FYGKKVKLNM…SKEIRISGGR (230 aa). [4Fe-4S] cluster is bound by residues Cys65, Cys69, and Cys72. [2Fe-2S] cluster is bound by residues Cys109, Cys141, Cys201, and Arg271.

Belongs to the radical SAM superfamily. Biotin synthase family. As to quaternary structure, homodimer. The cofactor is [4Fe-4S] cluster. It depends on [2Fe-2S] cluster as a cofactor.

It catalyses the reaction (4R,5S)-dethiobiotin + (sulfur carrier)-SH + 2 reduced [2Fe-2S]-[ferredoxin] + 2 S-adenosyl-L-methionine = (sulfur carrier)-H + biotin + 2 5'-deoxyadenosine + 2 L-methionine + 2 oxidized [2Fe-2S]-[ferredoxin]. The protein operates within cofactor biosynthesis; biotin biosynthesis; biotin from 7,8-diaminononanoate: step 2/2. Its function is as follows. Catalyzes the conversion of dethiobiotin (DTB) to biotin by the insertion of a sulfur atom into dethiobiotin via a radical-based mechanism. This is Biotin synthase from Bacillus velezensis (strain DSM 23117 / BGSC 10A6 / LMG 26770 / FZB42) (Bacillus amyloliquefaciens subsp. plantarum).